Here is a 309-residue protein sequence, read N- to C-terminus: Uracil phosphoribosyltransferase homolog (309 aa).

The tract at residues Met1–Gly41 is disordered. Positions Cys13–Pro26 are enriched in polar residues. At Ser25 the chain carries Phosphoserine. Residues Arg133, Arg142, and Glu176–Asn179 contribute to the GTP site. Arg186 provides a ligand contact to 5-phospho-alpha-D-ribose 1-diphosphate. Residues Arg203 and Arg232 each contribute to the GTP site. Residue Tyr238–Thr246 coordinates 5-phospho-alpha-D-ribose 1-diphosphate. Position 299-301 (Thr299–Phe301) interacts with uracil.

It belongs to the UPRTase family.

It localises to the cytoplasm. It is found in the nucleus. The polypeptide is Uracil phosphoribosyltransferase homolog (UPRT) (Macaca fascicularis (Crab-eating macaque)).